The primary structure comprises 182 residues: NADH-quinone oxidoreductase subunit I (182 aa).

4Fe-4S ferredoxin-type domains follow at residues 52 to 82 and 92 to 121; these read LTRD…LQKA and DFFR…LTPD. Cys-62, Cys-65, Cys-68, Cys-72, Cys-101, Cys-104, Cys-107, and Cys-111 together coordinate [4Fe-4S] cluster.

This sequence belongs to the complex I 23 kDa subunit family. NDH-1 is composed of 13 different subunits. Subunits NuoA, H, J, K, L, M, N constitute the membrane sector of the complex. The cofactor is [4Fe-4S] cluster.

It is found in the cell inner membrane. It carries out the reaction a quinone + NADH + 5 H(+)(in) = a quinol + NAD(+) + 4 H(+)(out). NDH-1 shuttles electrons from NADH, via FMN and iron-sulfur (Fe-S) centers, to quinones in the respiratory chain. The immediate electron acceptor for the enzyme in this species is believed to be ubiquinone. Couples the redox reaction to proton translocation (for every two electrons transferred, four hydrogen ions are translocated across the cytoplasmic membrane), and thus conserves the redox energy in a proton gradient. The protein is NADH-quinone oxidoreductase subunit I of Pseudomonas syringae pv. tomato (strain ATCC BAA-871 / DC3000).